The chain runs to 132 residues: MRSWFVFVALLAVVFLPSSLDALKCIQCDSQPNRDECKTTLPEARDCPQTVNNYCFKTETFNKNGDLSMLRRYCNVLASTQNGCVDLPGGLGKKCEYSCNTDGCNSVTGLVASRAAYLVTLLPIIFYALSRQ.

The signal sequence occupies residues 1–19; the sequence is MRSWFVFVALLAVVFLPSS.

It belongs to the scoloptoxin-05 family. In terms of processing, contains 5 disulfide bonds. Expressed by the venom gland.

The protein resides in the secreted. This is U-scoloptoxin(05)-Er3a from Ethmostigmus rubripes (Giant centipede).